The following is a 113-amino-acid chain: Large ribosomal subunit protein uL22 (113 aa).

This sequence belongs to the universal ribosomal protein uL22 family. In terms of assembly, part of the 50S ribosomal subunit.

Its function is as follows. This protein binds specifically to 23S rRNA; its binding is stimulated by other ribosomal proteins, e.g. L4, L17, and L20. It is important during the early stages of 50S assembly. It makes multiple contacts with different domains of the 23S rRNA in the assembled 50S subunit and ribosome. In terms of biological role, the globular domain of the protein is located near the polypeptide exit tunnel on the outside of the subunit, while an extended beta-hairpin is found that lines the wall of the exit tunnel in the center of the 70S ribosome. The sequence is that of Large ribosomal subunit protein uL22 from Magnetococcus marinus (strain ATCC BAA-1437 / JCM 17883 / MC-1).